We begin with the raw amino-acid sequence, 296 residues long: Ribosomal RNA small subunit methyltransferase A (296 aa).

Positions 31, 33, 58, 79, 111, and 136 each coordinate S-adenosyl-L-methionine.

The protein belongs to the class I-like SAM-binding methyltransferase superfamily. rRNA adenine N(6)-methyltransferase family. RsmA subfamily.

Its subcellular location is the cytoplasm. It catalyses the reaction adenosine(1518)/adenosine(1519) in 16S rRNA + 4 S-adenosyl-L-methionine = N(6)-dimethyladenosine(1518)/N(6)-dimethyladenosine(1519) in 16S rRNA + 4 S-adenosyl-L-homocysteine + 4 H(+). Its function is as follows. Specifically dimethylates two adjacent adenosines (A1518 and A1519) in the loop of a conserved hairpin near the 3'-end of 16S rRNA in the 30S particle. May play a critical role in biogenesis of 30S subunits. In Lactobacillus johnsonii (strain CNCM I-12250 / La1 / NCC 533), this protein is Ribosomal RNA small subunit methyltransferase A.